A 190-amino-acid chain; its full sequence is Guanylate kinase (190 aa).

The region spanning 8 to 188 is the Guanylate kinase-like domain; it reads GRLVILAGPS…AVKAIEDVLL (181 aa). 15–22 provides a ligand contact to ATP; that stretch reads GPSAVGKS.

The protein belongs to the guanylate kinase family.

The protein localises to the cytoplasm. It carries out the reaction GMP + ATP = GDP + ADP. Functionally, essential for recycling GMP and indirectly, cGMP. The sequence is that of Guanylate kinase from Corynebacterium glutamicum (strain ATCC 13032 / DSM 20300 / JCM 1318 / BCRC 11384 / CCUG 27702 / LMG 3730 / NBRC 12168 / NCIMB 10025 / NRRL B-2784 / 534).